Reading from the N-terminus, the 471-residue chain is Probable ribonuclease FAU-1 (471 aa).

It belongs to the FAU-1 family.

Functionally, probable RNase involved in rRNA stability through maturation and/or degradation of precursor rRNAs. Binds to RNA in loop regions with AU-rich sequences. The chain is Probable ribonuclease FAU-1 from Caldivirga maquilingensis (strain ATCC 700844 / DSM 13496 / JCM 10307 / IC-167).